The following is a 276-amino-acid chain: Formamidopyrimidine-DNA glycosylase (276 aa).

The Schiff-base intermediate with DNA role is filled by Pro-2. The Proton donor role is filled by Glu-3. The active-site Proton donor; for beta-elimination activity is Lys-58. Positions 94, 112, and 157 each coordinate DNA. Residues 242–276 form an FPG-type zinc finger; sequence FVYDRAGLPCRVCGTPIKQIVQGQRSTYFCPTCQR. Arg-266 functions as the Proton donor; for delta-elimination activity in the catalytic mechanism.

Belongs to the FPG family. As to quaternary structure, monomer. Zn(2+) serves as cofactor.

The enzyme catalyses Hydrolysis of DNA containing ring-opened 7-methylguanine residues, releasing 2,6-diamino-4-hydroxy-5-(N-methyl)formamidopyrimidine.. It catalyses the reaction 2'-deoxyribonucleotide-(2'-deoxyribose 5'-phosphate)-2'-deoxyribonucleotide-DNA = a 3'-end 2'-deoxyribonucleotide-(2,3-dehydro-2,3-deoxyribose 5'-phosphate)-DNA + a 5'-end 5'-phospho-2'-deoxyribonucleoside-DNA + H(+). Its function is as follows. Involved in base excision repair of DNA damaged by oxidation or by mutagenic agents. Acts as a DNA glycosylase that recognizes and removes damaged bases. Has a preference for oxidized purines, such as 7,8-dihydro-8-oxoguanine (8-oxoG). Has AP (apurinic/apyrimidinic) lyase activity and introduces nicks in the DNA strand. Cleaves the DNA backbone by beta-delta elimination to generate a single-strand break at the site of the removed base with both 3'- and 5'-phosphates. This chain is Formamidopyrimidine-DNA glycosylase, found in Paraburkholderia xenovorans (strain LB400).